A 1215-amino-acid polypeptide reads, in one-letter code: DNA-directed RNA polymerase subunit beta' (1215 aa).

Zn(2+) is bound by residues C60, C62, C75, and C78. Mg(2+) is bound by residues D450, D452, and D454. The Zn(2+) site is built by C819, C893, C900, and C903.

It belongs to the RNA polymerase beta' chain family. As to quaternary structure, the RNAP catalytic core consists of 2 alpha, 1 beta, 1 beta' and 1 omega subunit. When a sigma factor is associated with the core the holoenzyme is formed, which can initiate transcription. Requires Mg(2+) as cofactor. Zn(2+) is required as a cofactor.

It carries out the reaction RNA(n) + a ribonucleoside 5'-triphosphate = RNA(n+1) + diphosphate. Functionally, DNA-dependent RNA polymerase catalyzes the transcription of DNA into RNA using the four ribonucleoside triphosphates as substrates. This chain is DNA-directed RNA polymerase subunit beta', found in Levilactobacillus brevis (strain ATCC 367 / BCRC 12310 / CIP 105137 / JCM 1170 / LMG 11437 / NCIMB 947 / NCTC 947) (Lactobacillus brevis).